Reading from the N-terminus, the 165-residue chain is LIM domain transcription factor LMO4 (165 aa).

2 LIM zinc-binding domains span residues 23-83 (CAGC…LFGN) and 87-147 (CSAC…ALIN).

Interacts strongly with LDBS. Interacts with LDB2 and LDB1. Interaction with complexes consisting of at least LDB1 and LHX3 acts to disassemble the complex; may preferentially disassemble LDB1-LHX3 complexes rather than complexes consisting of LDB1, LHX3 and ISL1. Interacts (via the LIM zinc-binding domain 1) with RBBP8. Interacts with both RPPB8 and LDB1 through the same face and cannot bind to both proteins simultaneously. Interacts with BRCA1 (via the BRCT domains); the interaction represses BRCA1 transcriptional activity. Interacts with DEAF1; LMO4 blocks export from nucleus.

Transcription cofactor. Plays a role in establishing motor neuron identity, in concert with MNX1, acting, at least in part, to disrupt LDB1-LHX3 complexes thereby negatively modulating interneuron genes in motor neurons. This Bos taurus (Bovine) protein is LIM domain transcription factor LMO4 (LMO4).